The primary structure comprises 174 residues: NADH-quinone oxidoreductase subunit B 1 (174 aa).

Positions 38, 39, 104, and 133 each coordinate [4Fe-4S] cluster.

Belongs to the complex I 20 kDa subunit family. NDH-1 is composed of 14 different subunits. Subunits NuoB, C, D, E, F, and G constitute the peripheral sector of the complex. [4Fe-4S] cluster is required as a cofactor.

It is found in the cell membrane. The catalysed reaction is a quinone + NADH + 5 H(+)(in) = a quinol + NAD(+) + 4 H(+)(out). In terms of biological role, NDH-1 shuttles electrons from NADH, via FMN and iron-sulfur (Fe-S) centers, to quinones in the respiratory chain. The immediate electron acceptor for the enzyme in this species is believed to be ubiquinone. Couples the redox reaction to proton translocation (for every two electrons transferred, four hydrogen ions are translocated across the cytoplasmic membrane), and thus conserves the redox energy in a proton gradient. The protein is NADH-quinone oxidoreductase subunit B 1 of Chloroflexus aggregans (strain MD-66 / DSM 9485).